The sequence spans 370 residues: Aminomethyltransferase (370 aa).

This sequence belongs to the GcvT family. As to quaternary structure, the glycine cleavage system is composed of four proteins: P, T, L and H.

It carries out the reaction N(6)-[(R)-S(8)-aminomethyldihydrolipoyl]-L-lysyl-[protein] + (6S)-5,6,7,8-tetrahydrofolate = N(6)-[(R)-dihydrolipoyl]-L-lysyl-[protein] + (6R)-5,10-methylene-5,6,7,8-tetrahydrofolate + NH4(+). Its function is as follows. The glycine cleavage system catalyzes the degradation of glycine. This Clostridium botulinum (strain Okra / Type B1) protein is Aminomethyltransferase.